The primary structure comprises 348 residues: Histidinol-phosphate aminotransferase (348 aa).

Residue Lys207 is modified to N6-(pyridoxal phosphate)lysine.

Belongs to the class-II pyridoxal-phosphate-dependent aminotransferase family. Histidinol-phosphate aminotransferase subfamily. Homodimer. Requires pyridoxal 5'-phosphate as cofactor.

The catalysed reaction is L-histidinol phosphate + 2-oxoglutarate = 3-(imidazol-4-yl)-2-oxopropyl phosphate + L-glutamate. Its pathway is amino-acid biosynthesis; L-histidine biosynthesis; L-histidine from 5-phospho-alpha-D-ribose 1-diphosphate: step 7/9. The sequence is that of Histidinol-phosphate aminotransferase from Rippkaea orientalis (strain PCC 8801 / RF-1) (Cyanothece sp. (strain PCC 8801)).